A 2141-amino-acid polypeptide reads, in one-letter code: Oxygen-regulated protein 1 (2141 aa).

A compositionally biased stretch (polar residues) spans 1–10; the sequence is MSETSSTSVS. A disordered region spans residues 1 to 20; it reads MSETSSTSVSMIHRSFEGQG. In terms of domain architecture, Doublecortin 1 spans 34-116; that stretch reads KKISFYKSGD…RRKVQPVDLD (83 aa). The segment at 126-149 is disordered; it reads LSSRAISAHAQRSPPTSIGAAGAP. The Doublecortin 2 domain maps to 156 to 235; it reads RRLLVFRNGD…REPFKPGNYD (80 aa). Disordered regions lie at residues 259–278, 1432–1458, and 1589–1612; these read RSES…SQIY, YTSS…SSER, and DWSE…GPNG. Residues 268 to 278 show a composition bias toward polar residues; sequence HVPSSPRSQIY. A compositionally biased stretch (basic and acidic residues) spans 1435 to 1444; the sequence is SDKEDSKTSE. 2 stretches are compositionally biased toward polar residues: residues 1448–1458 and 1598–1610; these read SITNSMTSSER and ENEQ…SDGP.

As to quaternary structure, interacts (via the doublecortin domains) with microtubules. Interacts with RP1L1. Interacts with MAK.

It is found in the cytoplasm. The protein resides in the cytoskeleton. It localises to the cilium axoneme. The protein localises to the cell projection. Its subcellular location is the cilium. It is found in the photoreceptor outer segment. Functionally, microtubule-associated protein regulating the stability and length of the microtubule-based axoneme of photoreceptors. Required for the differentiation of photoreceptor cells, it plays a role in the organization of the outer segment of rod and cone photoreceptors ensuring the correct orientation and higher-order stacking of outer segment disks along the photoreceptor axoneme. This chain is Oxygen-regulated protein 1 (RP1), found in Canis lupus familiaris (Dog).